The sequence spans 60 residues: Ribosome modulation factor (60 aa).

This sequence belongs to the ribosome modulation factor family.

The protein resides in the cytoplasm. Functionally, during stationary phase, converts 70S ribosomes to an inactive dimeric form (100S ribosomes). This Kangiella koreensis (strain DSM 16069 / JCM 12317 / KCTC 12182 / SW-125) protein is Ribosome modulation factor.